We begin with the raw amino-acid sequence, 199 residues long: MITYTKPLSKLIGHFEKFPGIGPRTAQRLALFILKQPESTIREFSKALLEAHSNVGRCKKCFNLTSEDECEICRNTERNQKLICVVAETKDLLALERAREFKGVYHVIGGLISPMDSVGPELLEIRSLVERVSKSEIDEIILALTPSVEGDTTSLYIGKLLAPFTKVTRIAYGLPMGSELEYVDEVTLARALEGRTKLN.

The C4-type zinc-finger motif lies at 58–73 (CKKCFNLTSEDECEIC). Residues 81 to 175 (KLICVVAETK…KVTRIAYGLP (95 aa)) form the Toprim domain.

Belongs to the RecR family.

May play a role in DNA repair. It seems to be involved in an RecBC-independent recombinational process of DNA repair. It may act with RecF and RecO. The protein is Recombination protein RecR of Prochlorococcus marinus (strain MIT 9301).